A 502-amino-acid polypeptide reads, in one-letter code: Cytochrome P450 3A5 (502 aa).

C441 is a binding site for heme.

It belongs to the cytochrome P450 family. Heme serves as cofactor.

It is found in the endoplasmic reticulum membrane. Its subcellular location is the microsome membrane. It catalyses the reaction an organic molecule + reduced [NADPH--hemoprotein reductase] + O2 = an alcohol + oxidized [NADPH--hemoprotein reductase] + H2O + H(+). The catalysed reaction is 17beta-estradiol + reduced [NADPH--hemoprotein reductase] + O2 = 2-hydroxy-17beta-estradiol + oxidized [NADPH--hemoprotein reductase] + H2O + H(+). The enzyme catalyses 17beta-estradiol + reduced [NADPH--hemoprotein reductase] + O2 = 4-hydroxy-17beta-estradiol + oxidized [NADPH--hemoprotein reductase] + H2O + H(+). It carries out the reaction estrone + reduced [NADPH--hemoprotein reductase] + O2 = 2-hydroxyestrone + oxidized [NADPH--hemoprotein reductase] + H2O + H(+). It catalyses the reaction estrone + reduced [NADPH--hemoprotein reductase] + O2 = 4-hydroxyestrone + oxidized [NADPH--hemoprotein reductase] + H2O + H(+). The catalysed reaction is testosterone + reduced [NADPH--hemoprotein reductase] + O2 = 6beta,17beta-dihydroxyandrost-4-en-3-one + oxidized [NADPH--hemoprotein reductase] + H2O + H(+). The enzyme catalyses androst-4-ene-3,17-dione + reduced [NADPH--hemoprotein reductase] + O2 = 6beta-hydroxyandrost-4-ene-3,17-dione + oxidized [NADPH--hemoprotein reductase] + H2O + H(+). It carries out the reaction progesterone + reduced [NADPH--hemoprotein reductase] + O2 = 6beta-hydroxyprogesterone + oxidized [NADPH--hemoprotein reductase] + H2O + H(+). It catalyses the reaction all-trans-retinol + reduced [NADPH--hemoprotein reductase] + O2 = all-trans-retinal + oxidized [NADPH--hemoprotein reductase] + 2 H2O + H(+). The catalysed reaction is all-trans-retinoate + reduced [NADPH--hemoprotein reductase] + O2 = all-trans-4-hydroxyretinoate + oxidized [NADPH--hemoprotein reductase] + H2O + H(+). Its pathway is steroid hormone biosynthesis. It participates in cofactor metabolism; retinol metabolism. Functionally, a cytochrome P450 monooxygenase involved in the metabolism of steroid hormones and vitamins. Mechanistically, uses molecular oxygen inserting one oxygen atom into a substrate, and reducing the second into a water molecule, with two electrons provided by NADPH via cytochrome P450 reductase (NADPH--hemoprotein reductase). Catalyzes the hydroxylation of carbon-hydrogen bonds. Exhibits high catalytic activity for the formation of catechol estrogens from 17beta-estradiol (E2) and estrone (E1), namely 2-hydroxy E1 and E2. Catalyzes 6beta-hydroxylation of the steroid hormones testosterone, progesterone, and androstenedione. Catalyzes the oxidative conversion of all-trans-retinol to all-trans-retinal, a rate-limiting step for the biosynthesis of all-trans-retinoic acid (atRA). Further metabolizes all trans-retinoic acid (atRA) to 4-hydroxyretinoate and may play a role in hepatic atRA clearance. Also involved in the oxidative metabolism of xenobiotics, including calcium channel blocking drug nifedipine and immunosuppressive drug cyclosporine. The sequence is that of Cytochrome P450 3A5 from Homo sapiens (Human).